Here is a 100-residue protein sequence, read N- to C-terminus: Large ribosomal subunit protein uL23 (100 aa).

Belongs to the universal ribosomal protein uL23 family. In terms of assembly, part of the 50S ribosomal subunit. Contacts protein L29, and trigger factor when it is bound to the ribosome.

One of the early assembly proteins it binds 23S rRNA. One of the proteins that surrounds the polypeptide exit tunnel on the outside of the ribosome. Forms the main docking site for trigger factor binding to the ribosome. The protein is Large ribosomal subunit protein uL23 of Vibrio campbellii (strain ATCC BAA-1116).